The primary structure comprises 944 residues: Isoleucine--tRNA ligase (944 aa).

The short motif at 58–68 is the 'HIGH' region element; that stretch reads PYANGSIHIGH. Residue Glu-563 coordinates L-isoleucyl-5'-AMP. The short motif at 604–608 is the 'KMSKS' region element; the sequence is KMSKS. Position 607 (Lys-607) interacts with ATP. The Zn(2+) site is built by Cys-907, Cys-910, Cys-927, and Cys-930.

This sequence belongs to the class-I aminoacyl-tRNA synthetase family. IleS type 1 subfamily. As to quaternary structure, monomer. Zn(2+) is required as a cofactor.

The protein resides in the cytoplasm. It catalyses the reaction tRNA(Ile) + L-isoleucine + ATP = L-isoleucyl-tRNA(Ile) + AMP + diphosphate. Its function is as follows. Catalyzes the attachment of isoleucine to tRNA(Ile). As IleRS can inadvertently accommodate and process structurally similar amino acids such as valine, to avoid such errors it has two additional distinct tRNA(Ile)-dependent editing activities. One activity is designated as 'pretransfer' editing and involves the hydrolysis of activated Val-AMP. The other activity is designated 'posttransfer' editing and involves deacylation of mischarged Val-tRNA(Ile). This chain is Isoleucine--tRNA ligase, found in Salmonella typhimurium (strain LT2 / SGSC1412 / ATCC 700720).